Reading from the N-terminus, the 218-residue chain is Histone H1 (218 aa).

2 stretches are compositionally biased toward low complexity: residues 1–19 and 27–39; these read MSET…GAKA and AAGG…PAGP. Disordered stretches follow at residues 1–41 and 89–218; these read MSET…GPSV and VGKG…PKKK. Residue Ser-2 is modified to N-acetylserine. Residues 37–110 form the H15 domain; that stretch reads AGPSVTELIT…GASGSFKLNK (74 aa). Basic residues-rich tracts occupy residues 119–133, 141–158, 166–184, and 191–218; these read ATKK…KPAA, KKPK…KAKK, KAAK…KKAA, and KAVK…PKKK.

Belongs to the histone H1/H5 family.

The protein resides in the nucleus. The protein localises to the chromosome. Histones H1 are necessary for the condensation of nucleosome chains into higher-order structures. This Anas platyrhynchos (Mallard) protein is Histone H1.